Reading from the N-terminus, the 208-residue chain is Probable GTP-binding protein EngB (208 aa).

Positions leucine 23–threonine 205 constitute an EngB-type G domain. Residues glycine 31 to serine 38, glycine 57 to leucine 61, aspartate 84 to glycine 87, threonine 154 to aspartate 157, and phenylalanine 182 to alanine 184 contribute to the GTP site. Mg(2+) contacts are provided by serine 38 and threonine 59.

It belongs to the TRAFAC class TrmE-Era-EngA-EngB-Septin-like GTPase superfamily. EngB GTPase family. The cofactor is Mg(2+).

Necessary for normal cell division and for the maintenance of normal septation. This is Probable GTP-binding protein EngB from Helicobacter acinonychis (strain Sheeba).